The primary structure comprises 289 residues: Thiosulfate sulfurtransferase (289 aa).

The 119-residue stretch at 24-142 folds into the Rhodanese 1 domain; that stretch reads VGAGLRVLDA…WVKEGHPVTA (119 aa). The hinge stretch occupies residues 143–158; the sequence is EPSQPAEAVFKAKLDK. In terms of domain architecture, Rhodanese 2 spans 172 to 284; sequence GSKKFQVVDS…WFHRAPPQYK (113 aa). Arg-186 contacts substrate. Cys-244 functions as the Cysteine persulfide intermediate in the catalytic mechanism. Lys-246 is a substrate binding site.

In terms of assembly, monomer. In terms of tissue distribution, expressed in numerous tissues.

The protein localises to the mitochondrion matrix. It carries out the reaction thiosulfate + hydrogen cyanide = thiocyanate + sulfite + 2 H(+). Functionally, together with MRPL18, acts as a mitochondrial import factor for the cytosolic 5S rRNA. Only the nascent unfolded cytoplasmic form is able to bind to the 5S rRNA. Formation of iron-sulfur complexes and cyanide detoxification. This Gallus gallus (Chicken) protein is Thiosulfate sulfurtransferase (TST).